Consider the following 510-residue polypeptide: MSHIQVFDTTLRDGEQTPGVSFSFDERLTIAKQLEKWGVDVIEAGFPASSQGSFDSVKAISETLTKTAVVGLARCKKSDIDAVYEATKDAKYPQLHVFIASSPIHLEHKLKMTQEELLENITENVSYGKSLFDVVQFSPEDATRTDLDFLVKCVQTAVDAGASIINIPDTVGFSYPSEFGNIFKVLIENVKSDHEVTYSAHCHDDLGLAVANSMAAIENGATRIEGAVNGIGERAGNTALEEVALGLYVRRDHYGIETNLKLDETKATSDLVASFAGIRVPRNKAIVGQNAFSHESGIHQDGFLKHPETYEIMTPQLVGIKSSELPLGKLSGKHAFAEKLKQLGYDITAEKQVELFKQFKSIADKKKNVSDHDVHALVQGHSHETNAAYQVETLQLQFVSEGVQSAVVVLKDHEGKEYPSAAIGTGSIVAVYNAVDQIFKAPSELLNYQITSVTEGSDAQAQVNVEIRIDGKTYYGIGVDHDVLLASCKAYVEANSNHLADTARKDGVVS.

In terms of domain architecture, Pyruvate carboxyltransferase spans 4-266 (IQVFDTTLRD…ETNLKLDETK (263 aa)). Asp13, His201, His203, and Asn237 together coordinate Mn(2+). The segment at 390–510 (QVETLQLQFV…DTARKDGVVS (121 aa)) is regulatory domain.

Belongs to the alpha-IPM synthase/homocitrate synthase family. LeuA type 1 subfamily. Homodimer. Mn(2+) serves as cofactor.

The protein resides in the cytoplasm. It catalyses the reaction 3-methyl-2-oxobutanoate + acetyl-CoA + H2O = (2S)-2-isopropylmalate + CoA + H(+). It functions in the pathway amino-acid biosynthesis; L-leucine biosynthesis; L-leucine from 3-methyl-2-oxobutanoate: step 1/4. Functionally, catalyzes the condensation of the acetyl group of acetyl-CoA with 3-methyl-2-oxobutanoate (2-ketoisovalerate) to form 3-carboxy-3-hydroxy-4-methylpentanoate (2-isopropylmalate). This chain is 2-isopropylmalate synthase, found in Staphylococcus carnosus (strain TM300).